The sequence spans 228 residues: Uracil-DNA glycosylase (228 aa).

The active-site Proton acceptor is the Asp65.

The protein belongs to the uracil-DNA glycosylase (UDG) superfamily. UNG family.

The protein localises to the cytoplasm. It catalyses the reaction Hydrolyzes single-stranded DNA or mismatched double-stranded DNA and polynucleotides, releasing free uracil.. Its function is as follows. Excises uracil residues from the DNA which can arise as a result of misincorporation of dUMP residues by DNA polymerase or due to deamination of cytosine. In Lacticaseibacillus paracasei (strain ATCC 334 / BCRC 17002 / CCUG 31169 / CIP 107868 / KCTC 3260 / NRRL B-441) (Lactobacillus paracasei), this protein is Uracil-DNA glycosylase.